The chain runs to 208 residues: Ribosomal RNA small subunit methyltransferase G (208 aa).

S-adenosyl-L-methionine-binding positions include glycine 76, leucine 81, 127–128 (VE), and arginine 142.

It belongs to the methyltransferase superfamily. RNA methyltransferase RsmG family.

The protein localises to the cytoplasm. It carries out the reaction guanosine(527) in 16S rRNA + S-adenosyl-L-methionine = N(7)-methylguanosine(527) in 16S rRNA + S-adenosyl-L-homocysteine. In terms of biological role, specifically methylates the N7 position of guanine in position 527 of 16S rRNA. The chain is Ribosomal RNA small subunit methyltransferase G from Legionella pneumophila (strain Corby).